Consider the following 473-residue polypeptide: 3-oxoacyl-[acyl-carrier-protein] synthase I, chloroplastic (473 aa).

Over residues 1–10 (MQALQSSSLR) the composition is skewed to polar residues. Residues 1–26 (MQALQSSSLRASPPNPLRLPSNRQSH) form a disordered region. The transit peptide at 1 to 46 (MQALQSSSLRASPPNPLRLPSNRQSHQLITNARPLRRQQRSFISAS) directs the protein to the chloroplast. The 411-residue stretch at 60–470 (KKRVVITGMG…GHNSVVAFSA (411 aa)) folds into the Ketosynthase family 3 (KS3) domain. Active-site for beta-ketoacyl synthase activity residues include Cys224, His364, and His400.

It belongs to the thiolase-like superfamily. Beta-ketoacyl-ACP synthases family. As to quaternary structure, homodimer.

The protein resides in the plastid. The protein localises to the chloroplast stroma. The catalysed reaction is a fatty acyl-[ACP] + malonyl-[ACP] + H(+) = a 3-oxoacyl-[ACP] + holo-[ACP] + CO2. Its function is as follows. Catalyzes the condensation reaction of fatty acid synthesis by the addition to an acyl acceptor of two carbons from malonyl-ACP. Specific for elongation from C-10 to unsaturated C-16 and C-18 fatty acids. The protein is 3-oxoacyl-[acyl-carrier-protein] synthase I, chloroplastic (KAS1) of Arabidopsis thaliana (Mouse-ear cress).